Here is a 154-residue protein sequence, read N- to C-terminus: Small ribosomal subunit protein uS7 (154 aa).

Belongs to the universal ribosomal protein uS7 family. Part of the 30S ribosomal subunit. Contacts proteins S9 and S11.

In terms of biological role, one of the primary rRNA binding proteins, it binds directly to 16S rRNA where it nucleates assembly of the head domain of the 30S subunit. Is located at the subunit interface close to the decoding center, probably blocks exit of the E-site tRNA. The sequence is that of Small ribosomal subunit protein uS7 from Karelsulcia muelleri (strain GWSS) (Sulcia muelleri).